Here is a 490-residue protein sequence, read N- to C-terminus: UDP-N-acetylmuramoylalanine--D-glutamate ligase (490 aa).

124–130 contributes to the ATP binding site; it reads GTNGKTT.

The protein belongs to the MurCDEF family.

It localises to the cytoplasm. It carries out the reaction UDP-N-acetyl-alpha-D-muramoyl-L-alanine + D-glutamate + ATP = UDP-N-acetyl-alpha-D-muramoyl-L-alanyl-D-glutamate + ADP + phosphate + H(+). It participates in cell wall biogenesis; peptidoglycan biosynthesis. Its function is as follows. Cell wall formation. Catalyzes the addition of glutamate to the nucleotide precursor UDP-N-acetylmuramoyl-L-alanine (UMA). This chain is UDP-N-acetylmuramoylalanine--D-glutamate ligase (murD), found in Mycobacterium leprae (strain TN).